A 280-amino-acid chain; its full sequence is Eukaryotic translation initiation factor 3 subunit F-1 (280 aa).

An MPN domain is found at 8–138 (VRVHPVVLFQ…LRAYVCIQLG (131 aa)).

Belongs to the eIF-3 subunit F family. In terms of assembly, component of the eukaryotic translation initiation factor 3 (eIF-3) complex. The eIF-3 complex interacts with pix.

It localises to the cytoplasm. Component of the eukaryotic translation initiation factor 3 (eIF-3) complex, which is involved in protein synthesis of a specialized repertoire of mRNAs and, together with other initiation factors, stimulates binding of mRNA and methionyl-tRNAi to the 40S ribosome. The eIF-3 complex specifically targets and initiates translation of a subset of mRNAs involved in cell proliferation. In Drosophila ananassae (Fruit fly), this protein is Eukaryotic translation initiation factor 3 subunit F-1.